The primary structure comprises 698 residues: UV radiation resistance-associated protein (698 aa).

Over residues 1 to 10 (MSSCASLGGP) the composition is skewed to low complexity. Residues 1–21 (MSSCASLGGPVPLPPPGPSAA) form a disordered region. Residues 23 to 149 (TSGAPARALH…YLGQQIHARN (127 aa)) enclose the C2 domain. The interval 199 to 268 (HRAQCAIKQT…REVAFLHKQQ (70 aa)) is sufficient for interaction with STX7; VTI1B AND STX8. Residues 200–304 (RAQCAIKQTQ…LRKECTAKRE (105 aa)) are a coiled coil. The segment at 269–441 (MALQDKGSAF…IAQLRYQHGL (173 aa)) is sufficient for interaction with VPS16, required for interaction with CEP63. Positions 442–698 (GTPDLRQTLP…FRRPRRSSDK (257 aa)) are required for interaction with PRKDC, XRCC6 and XRCC5. Disordered stretches follow at residues 477–551 (PKRQ…SSLD) and 565–586 (VDLG…EQGE). Position 492 is a phosphoserine (Ser492). Position 497 is a phosphoserine; by MTOR (Ser497). Ser507 bears the Phosphoserine mark. Thr517 is subject to Phosphothreonine. Phosphoserine occurs at positions 521, 548, 549, 570, and 688.

Component of the PI3K (PI3KC3/PI3K-III/class III phosphatidylinositol 3-kinase) complex II (PI3KC3-C2) in which the core composed of the catalytic subunit PIK3C3, the regulatory subunit PIK3R4 and BECN1 is associated with UVRAG; in the complex interacts directly with BECN1. PI3KC3-C2 can associate with further regulatory subunits such as RUBCN and probably SH3GLB1/Bif-1. Interacts with SH3GLB1; UVRAG bridges the interaction to BECN1 indicative for an association with the PI3K complex PI3KC3-C2. Interacts with RINT1. Associates with the NRZ complex under basal conditions and dissociates from it under autophagy conditions to associate with the PI3K complex; these complex associations seem to be mutually exclusive. Interacts with VPS16; VPS11; VPS18; VPS33 (VPS33A or VPS33B) and VPS39; indicative for an association with a class C Vps tethering complex (possibly the HOPS complex). Interacts with RAB7A; RAB7A competes with UVRAG for RUBCN binding. Interacts with STX7, VTI1B, STX8. Interacts with PRKDC, XRCC6 and XRCC5; indicative for an association with the DNA-dependent protein kinase complex DNA-PK. Interacts with CEP63. Directly interacts with FEZ1 and SCOC; the interaction with SCOC is reduced by amino acid starvation, but the complex is stabilized in the presence of FEZ1. Interacts with BECN1P1/BECN2. Interacts with SLAMF1. Interacts with RUBCNL/PACER; promoting targeting of UVRAG to autophagosome. Interacts with WNK1. Post-translationally, phosphorylated at Ser-497 by MTOR under basal conditions; increases the interaction with RUBCN implicated in inhibitory effect of RUBCN on PI3KC3 and decreases interaction with RAB7A, and VPS16 and VPS39 (indicative for a class C Vps complex, possibly the HOPS complex).

It is found in the late endosome. The protein localises to the lysosome. The protein resides in the cytoplasmic vesicle. It localises to the autophagosome. Its subcellular location is the early endosome. It is found in the endoplasmic reticulum. The protein localises to the midbody. The protein resides in the chromosome. It localises to the centromere. Functionally, versatile protein that is involved in regulation of different cellular pathways implicated in membrane trafficking. Involved in regulation of the COPI-dependent retrograde transport from Golgi and the endoplasmic reticulum by associating with the NRZ complex; the function is dependent on its binding to phosphatidylinositol 3-phosphate (PtdIns(3)P). During autophagy acts as a regulatory subunit of the alternative PI3K complex II (PI3KC3-C2) that mediates formation of phosphatidylinositol 3-phosphate and is believed to be involved in maturation of autophagosomes and endocytosis. Activates lipid kinase activity of PIK3C3. Involved in the regulation of degradative endocytic trafficking and cytokinesis, and in regulation of ATG9A transport from the Golgi to the autophagosome; the functions seems to implicate its association with PI3KC3-C2. Involved in maturation of autophagosomes and degradative endocytic trafficking independently of BECN1 but depending on its association with a class C Vps complex (possibly the HOPS complex); the association is also proposed to promote autophagosome recruitment and activation of Rab7 and endosome-endosome fusion events. Enhances class C Vps complex (possibly HOPS complex) association with a SNARE complex and promotes fusogenic SNARE complex formation during late endocytic membrane fusion. In case of negative-strand RNA virus infection is required for efficient virus entry, promotes endocytic transport of virions and is implicated in a VAMP8-specific fusogenic SNARE complex assembly. In terms of biological role, involved in maintaining chromosomal stability. Promotes DNA double-strand break (DSB) repair by association with DNA-dependent protein kinase complex DNA-PK and activating it in non-homologous end joining (NHEJ). Required for centrosome stability and proper chromosome segregation. This is UV radiation resistance-associated protein (Uvrag) from Mus musculus (Mouse).